Here is a 1083-residue protein sequence, read N- to C-terminus: Protein HOS4 (1083 aa).

Disordered stretches follow at residues 1 to 233 and 267 to 328; these read MNET…RKLV and SSLF…YRDS. A phosphoserine mark is found at Ser-14 and Ser-16. Basic and acidic residues predominate over residues 24–62; that stretch reads TRREELEKISKQETSEEEDTAGKHEQRETLSEEVSDKFP. Thr-37 carries the post-translational modification Phosphothreonine. The residue at position 67 (Ser-67) is a Phosphoserine. Residues 67–85 show a composition bias toward polar residues; sequence SFRSQTTSVHQATQNNLNA. Over residues 86–118 the composition is skewed to basic and acidic residues; sequence KESEDLAHKNDASSHEGEVNGDSRPDDVPETNE. Polar residues predominate over residues 135–149; it reads PNVRNVDIQNHQPFS. Basic and acidic residues predominate over residues 151–166; sequence DQLRAMLKEPKRKTVD. Positions 167 to 185 are enriched in acidic residues; the sequence is DFIEEEGLGAVEEEDLSDE. Residues 186 to 207 are compositionally biased toward basic and acidic residues; the sequence is VLEKNTTEPENVEKDIEYSDSD. Over residues 277–293 the composition is skewed to polar residues; it reads VKETNNNLSNMNSSPAQ. Residue Ser-290 is modified to Phosphoserine. Low complexity predominate over residues 300–310; sequence VSRSNDSNKSS. Residues 314–323 show a composition bias toward basic residues; sequence VSKRPKQKKG. 3 ANK repeats span residues 329–359, 363–392, and 398–427; these read GGRT…DIND, AGNT…DVNI, and FGDT…DPTI. A disordered region spans residues 472-516; sequence AGIHNDKSKNGNNAHTIDQPPFDNTTKAKNEKAADSPSMASNIDE. Positions 481–496 are enriched in polar residues; that stretch reads NGNNAHTIDQPPFDNT. A Phosphoserine modification is found at Ser-507. ANK repeat units follow at residues 532–561 and 593–622; these read AGKE…KIDL and NKTS…DPTK. Disordered stretches follow at residues 661–742 and 762–790; these read HSED…DDNE and DEEK…ISKI. The span at 665–675 shows a compositional bias: acidic residues; it reads NNDDDDDDDNN. Position 698 is a phosphoserine (Ser-698). Position 700 is a phosphothreonine (Thr-700). Positions 721-740 are enriched in basic and acidic residues; the sequence is NNDRDVKESTTSDSRKRLDD. The residue at position 778 (Ser-778) is a Phosphoserine.

As to quaternary structure, identified in the Set3C complex with HOS2, HST1, SNT1, SIF2, CPR1 and SET3.

Functionally, unknown. Component of the Set3C complex, which is required to repress early/middle sporulation genes during meiosis. This Saccharomyces cerevisiae (strain ATCC 204508 / S288c) (Baker's yeast) protein is Protein HOS4 (HOS4).